Reading from the N-terminus, the 403-residue chain is RILP-like protein 1 (403 aa).

Ser-7 bears the Phosphoserine mark. One can recognise an RH1 domain in the interval 10–97; it reads AAESALEKNV…RLERMDRIEK (88 aa). Residue Cys-47 is modified to S-nitrosocysteine. The stretch at 76 to 258 forms a coiled coil; that stretch reads ELDELRLELD…KLRERLQGEH (183 aa). 3 disordered regions span residues 254 to 275, 327 to 352, and 384 to 403; these read LQGEHSQNGEEEPETEPVGEES, EMEEENRIPQPPPIAHPRTSPQPESG, and ANTHRDDGYTEQGQEALQHL. Phosphoserine is present on Ser-259. A compositionally biased stretch (acidic residues) spans 262 to 275; it reads GEEEPETEPVGEES. Residues 291 to 356 enclose the RH2 domain; the sequence is RPRFTLQELR…PQPESGIKRL (66 aa). Polar residues predominate over residues 394–403; the sequence is EQGQEALQHL.

It belongs to the RILPL family. In terms of assembly, interacts (when S-nitrosylated) with GAPDH. Interacts with RAB8A; interaction is dependent on the phosphorylation of 'Thr-72' of RAB8A. Interacts with RAB10 and RAB12; the interaction is dependent on the phosphorylation of 'Thr-73' of RAB10, and 'Ser-105' of RAB12. Post-translationally, S-nitrosylation is required for the interaction with GAPDH. As to expression, widely expressed. Expressed at lower level in liver and kidney.

It is found in the cytoplasm. Its subcellular location is the cytosol. The protein localises to the cytoskeleton. It localises to the microtubule organizing center. The protein resides in the centrosome. It is found in the centriole. Its subcellular location is the cilium basal body. Plays a role in the regulation of cell shape and polarity. Plays a role in cellular protein transport, including protein transport away from primary cilia. Neuroprotective protein, which acts by sequestring GAPDH in the cytosol and prevent the apoptotic function of GAPDH in the nucleus. Competes with SIAH1 for binding GAPDH. Does not regulate lysosomal morphology and distribution. Binds to RAB10 following LRRK2-mediated RAB10 phosphorylation which leads to inhibition of ciliogenesis. The sequence is that of RILP-like protein 1 (RILPL1) from Homo sapiens (Human).